The sequence spans 154 residues: Protein aau3 (154 aa).

Residues 2 to 132 enclose the HTH rrf2-type domain; it reads RLTKQTNYAV…QGYTIDDLVK (131 aa). 3 residues coordinate [2Fe-2S] cluster: C91, C99, and C105.

It depends on [2Fe-2S] cluster as a cofactor.

Required for growth utilizing PHB cycle intermediates. The polypeptide is Protein aau3 (aau3) (Rhizobium meliloti (strain 1021) (Ensifer meliloti)).